The chain runs to 618 residues: Very-long-chain aldehyde decarbonylase GL1-3 (618 aa).

7 helical membrane passes run 9–29 (LSSWPWAFLGSYKYLLYGPVV), 46–66 (TSWCLHLILLLALRSLTMLFF), 91–111 (MVIMQTLIAAVLVTSRVFPAT), 121–141 (GWAIAVVLHVAVSEPAFYWAH), 174–194 (LESLILTLVAWAPLAGAFMAG), 289–309 (DFVFLVHVVDVVSSMHVPFAF), and 315–335 (LPFATHLVLLPLWPIAFGFML). The 141-residue stretch at 127 to 267 (VLHVAVSEPA…MPLFDALGGT (141 aa)) folds into the Fatty acid hydroxylase domain.

The protein belongs to the sterol desaturase family. In terms of assembly, homodimer. Expressed in germinating seeds and stamens.

It localises to the endoplasmic reticulum membrane. It carries out the reaction a long-chain fatty aldehyde + 2 NADPH + O2 + H(+) = a long-chain alkane + formate + 2 NADP(+) + H2O. Functionally, aldehyde decarbonylase involved in the conversion of aldehydes to alkanes. Core component of a very-long-chain alkane synthesis complex. This is Very-long-chain aldehyde decarbonylase GL1-3 from Oryza sativa subsp. japonica (Rice).